The chain runs to 461 residues: Probable tubulin polyglutamylase TTLL9 (461 aa).

Residues 1–10 show a composition bias toward polar residues; the sequence is MSRQKNQNSK. The tract at residues 1–20 is disordered; it reads MSRQKNQNSKGHGVSKGKER. The TTL domain maps to 22–402; that stretch reads QRTLIRFKTT…EARLTGKEKR (381 aa). Residues lysine 149 and 155-156 each bind ATP; that span reads QG. Glutamine 155 is an a protein binding site. The interval 172-208 is disordered; sequence RKGTSGKKPTGVETQPARANMNPSGSHDTRSSDDQKD. Over residues 198-208 the composition is skewed to basic and acidic residues; sequence HDTRSSDDQKD. Residues 218 to 221 and 231 to 233 each bind ATP; these read QRYV and KFD. Residue arginine 257 coordinates L-glutamate. Residue 276–277 coordinates ATP; sequence TN. An L-glutamate-binding site is contributed by lysine 294. Mg(2+)-binding residues include aspartate 348, glutamate 361, and asparagine 363. An L-glutamate-binding site is contributed by lysine 379.

This sequence belongs to the tubulin--tyrosine ligase family. Mg(2+) serves as cofactor. As to expression, highly expressed in brain and testis. Expressed in heart, kidney and lung. In the brain, expressed in ependymal cilia, cortex, corpus callosum and striatum. In the testis, specifically expressed in the seminiferous tubules.

It is found in the cytoplasm. It localises to the cytoskeleton. The protein localises to the cilium basal body. Its subcellular location is the flagellum axoneme. It carries out the reaction (L-glutamyl)(n)-gamma-L-glutamyl-L-glutamyl-[protein] + L-glutamate + ATP = (L-glutamyl)(n+1)-gamma-L-glutamyl-L-glutamyl-[protein] + ADP + phosphate + H(+). Its function is as follows. Probable tubulin polyglutamylase that generates side chains of glutamate on the gamma-carboxyl group of specific glutamate residues within the C-terminal tail of target proteins. Similar to TTLL1, may acquire enzymatic activity only in complex with other proteins as it is most likely lacking domains important for autonomous activity. Mediates tubulin polyglutamylation which induces establishment of microtubule heterogeneity in sperm flagella, thereby playing a role in normal motile flagella axoneme structure and sperm flagella beating pattern. The polypeptide is Probable tubulin polyglutamylase TTLL9 (Mus musculus (Mouse)).